We begin with the raw amino-acid sequence, 415 residues long: Coenzyme F420 hydrogenase subunit alpha (415 aa).

Positions 68, 71, 391, and 394 each coordinate Ni(2+).

This sequence belongs to the [NiFe]/[NiFeSe] hydrogenase large subunit family. In terms of assembly, heterocomplex of the form (alpha(1)beta(1)gamma(1))(8). Requires Ni(2+) as cofactor. The cofactor is iron-sulfur cluster. It depends on FAD as a cofactor.

It carries out the reaction oxidized coenzyme F420-(gamma-L-Glu)(n) + H2 + H(+) = reduced coenzyme F420-(gamma-L-Glu)(n). In terms of biological role, reduces the physiological low-potential two-electron acceptor coenzyme F420, and the artificial one-electron acceptor methylviologen. In Methanocaldococcus jannaschii (strain ATCC 43067 / DSM 2661 / JAL-1 / JCM 10045 / NBRC 100440) (Methanococcus jannaschii), this protein is Coenzyme F420 hydrogenase subunit alpha (frhA).